The chain runs to 248 residues: Ras-like protein family member 11B (248 aa).

The interval 29–246 is small GTPase-like; sequence AGRRLVKIAV…ALSAKVRTVT (218 aa). GTP-binding positions include 40–47, 87–91, and 152–155; these read GASGVGKT, DTPGI, and NKAD. The tract at residues 205–229 is disordered; it reads QQPSGTPEKRRTSLIPRPKSPNMQD.

It belongs to the small GTPase superfamily. Ras family.

It catalyses the reaction GTP + H2O = GDP + phosphate + H(+). This is Ras-like protein family member 11B from Bos taurus (Bovine).